The chain runs to 703 residues: Leucine zipper putative tumor suppressor 3 (703 aa).

3 disordered regions span residues 1–22, 40–190, and 204–347; these read MAPA…PHLF, RADP…SEPL, and FHSM…PPSP. Low complexity predominate over residues 96-107; sequence GSFPGPRSSGSG. Residues 109–124 are compositionally biased toward basic and acidic residues; that stretch reads NRERPGPGRYPSEDKV. Over residues 205-218 the composition is skewed to polar residues; the sequence is HSMQNLCPPQTNGT. Residues 251–268 are compositionally biased toward low complexity; that stretch reads DSGRNSLTSLPTYSSSYS. The segment covering 290–299 has biased composition (gly residues); the sequence is SSGGGGGGSG. Over residues 304–324 the composition is skewed to low complexity; the sequence is GTSDSGRASSKSGSSSSMGRS. The span at 325-336 shows a compositional bias: gly residues; it reads GHLGSGEGGNGG. Phosphoserine is present on residues S346 and S348. Coiled coils occupy residues 348–526 and 600–669; these read SALI…SLRD and TRAL…RLRE. A disordered region spans residues 665-703; the sequence is RRLRERGAAGGSRTPTPQHGEEEKAWTPSRLERIESTEI. A compositionally biased stretch (basic and acidic residues) spans 683-703; the sequence is HGEEEKAWTPSRLERIESTEI.

The protein belongs to the LZTS3 family. In terms of assembly, interacts (via C-terminus) with SHANK3 (via PDZ domain). Interacts (via coiled coil) with SIPA1L1. Can form homooligomers. In terms of tissue distribution, detected in brain, with highest expression in brain cortex, caudate putamen, cerebellum and hippocampus. Detected in neuropil (at protein level). Detected in brain and kidney.

The protein localises to the synapse. The protein resides in the postsynaptic density. It is found in the cell projection. Its subcellular location is the dendritic spine. It localises to the dendrite. The protein localises to the cytoplasm. The protein resides in the cytoskeleton. Functionally, may be involved in promoting the maturation of dendritic spines, probably via regulating SIPA1L1 levels at the postsynaptic density of synapses. The polypeptide is Leucine zipper putative tumor suppressor 3 (Rattus norvegicus (Rat)).